The sequence spans 424 residues: D-inositol 3-phosphate glycosyltransferase (424 aa).

Residue H20 coordinates 1D-myo-inositol 3-phosphate. UDP-N-acetyl-alpha-D-glucosamine-binding positions include 26–27 (QP) and G34. 1D-myo-inositol 3-phosphate is bound by residues 31-36 (DAGGMN), K89, Y122, T146, and R166. Residues R240, K245, and M306 each contribute to the UDP-N-acetyl-alpha-D-glucosamine site. Y315, R316, and A318 together coordinate Mg(2+). Residues E328 and E336 each contribute to the UDP-N-acetyl-alpha-D-glucosamine site. T342 serves as a coordination point for Mg(2+).

This sequence belongs to the glycosyltransferase group 1 family. MshA subfamily. Homodimer.

It carries out the reaction 1D-myo-inositol 3-phosphate + UDP-N-acetyl-alpha-D-glucosamine = 1D-myo-inositol 2-acetamido-2-deoxy-alpha-D-glucopyranoside 3-phosphate + UDP + H(+). In terms of biological role, catalyzes the transfer of a N-acetyl-glucosamine moiety to 1D-myo-inositol 3-phosphate to produce 1D-myo-inositol 2-acetamido-2-deoxy-glucopyranoside 3-phosphate in the mycothiol biosynthesis pathway. In Kribbella flavida (strain DSM 17836 / JCM 10339 / NBRC 14399), this protein is D-inositol 3-phosphate glycosyltransferase.